The sequence spans 2344 residues: Genome polyprotein (2344 aa).

One can recognise an SF3 helicase domain in the interval 492–653 (QKVISDLHTM…ESWQATRHGS (162 aa)). 522-529 (GAPGIGKT) contributes to the ATP binding site. Tyrosine 1014 carries the O-(5'-phospho-RNA)-tyrosine modification. An O-UMP-tyrosine; transient modification is found at tyrosine 1014. In terms of domain architecture, Peptidase C24 spans 1109 to 1244 (GLPGFMRHNG…SKMCTLIDLT (136 aa)). Active-site for 3CLpro activity residues include histidine 1135, aspartate 1152, and cysteine 1212. The RdRp catalytic domain maps to 1495 to 1619 (SDFLCLDYSK…AMTPMMVSLL (125 aa)). A disulfide bridge connects residues cysteine 1584 and cysteine 1591. The disordered stretch occupies residues 1771-1794 (RTAPQGEAAGTATTASVPGTTTDG). Over residues 1778-1794 (AAGTATTASVPGTTTDG) the composition is skewed to low complexity.

As to quaternary structure, homodimer. Homomultimer. Interacts with host type II histo-blood group structures antigens at the surface of target cells. It depends on Mn(2+) as a cofactor. In terms of processing, specific enzymatic cleavages by its own cysteine protease yield mature proteins. The protease cleaves itself from the nascent polyprotein autocatalytically. Precursor p41 can be cleaved by viral 3CLpro into protein p19 and VPg, or cleaved by host protease into protein p23/2 and protein p18. VPg is uridylylated by the polymerase and is covalently attached to the 5'-end of the polyadenylated genomic and subgenomic RNAs. This uridylylated form acts as a nucleotide-peptide primer for the polymerase.

It is found in the host cytoplasm. The protein localises to the host endoplasmic reticulum. It localises to the virion. The enzyme catalyses a ribonucleoside 5'-triphosphate + H2O = a ribonucleoside 5'-diphosphate + phosphate + H(+). The catalysed reaction is Endopeptidase with a preference for cleavage when the P1 position is occupied by Glu-|-Xaa and the P1' position is occupied by Gly-|-Yaa.. It carries out the reaction RNA(n) + a ribonucleoside 5'-triphosphate = RNA(n+1) + diphosphate. Functionally, together with NTPase and NS4, initiates the formation of the replication complex. Induces the proliferation of the host smooth ER membranes forming long tubular structures. These remodeled membranes probably form the viral factories that contain the replication complex. In terms of biological role, displays NTPase activity, but no helicase activity. Induces the formation of convoluted membranes derived from the host ER. These remodeled membranes probably form the viral factories that contain the replication complex. Together with NS2 and NS4, initiates the formation of the replication complex. Its function is as follows. Probable key protein responsible for the formation of membrane alterations by the virus. Induces the formation of convoluted membranes derived from the host ER. These remodeled membranes probably form the viral factories that contain the replication complex. Together with NS2 and NTPase, initiates the formation of the replication complex. Viral genome-linked protein is covalently linked to the 5'-end of the positive-strand, negative-strand genomic RNAs and subgenomic RNA. Acts as a genome-linked replication primer. May recruit ribosome to viral RNA thereby promoting viral proteins translation. Interacts with host translation initiation complex to allow the translation of viral proteins. Functionally, processes the polyprotein. 3CLpro-RdRp is first released by autocleavage, then all other proteins are cleaved. May cleave polyadenylate-binding protein thereby inhibiting cellular translation. In terms of biological role, replicates genomic and antigenomic RNA by recognizing replications specific signals. Also transcribes a subgenomic mRNA by initiating RNA synthesis internally on antigenomic RNA. This sgRNA codes for structural proteins. Catalyzes the covalent attachment VPg with viral RNAs. Its function is as follows. Capsid protein VP60 self assembles to form an icosahedral capsid with a T=3 symmetry, about 35 nm in diameter, and consisting of 180 capsid proteins. A smaller form of capsid with a diameter of 23 nm might be capsid proteins assembled as icosahedron with T=1 symmetry. The capsid encapsulate VP2 proteins and genomic or subgenomic RNA. Attaches virion to target cells by binding histo-blood group antigens, inducing endocytosis of the viral particle. Acidification of the endosome induces conformational change of capsid protein thereby injecting virus genomic RNA into host cytoplasm. This chain is Genome polyprotein, found in Oryctolagus cuniculus (Rabbit).